The primary structure comprises 897 residues: Transportin-2 (897 aa).

HEAT repeat units lie at residues Gly-9–Lys-36, Phe-41–Gln-79, Phe-88–Leu-121, Leu-127–Asp-164, Asn-171–Met-201, Phe-214–Leu-241, His-253–Thr-280, Val-296–Val-386, His-394–Ala-422, Pro-434–Arg-461, Leu-475–Ala-508, Leu-516–Val-549, Glu-557–Gln-595, Glu-603–Gly-654, Ile-665–Phe-696, Ala-704–Gly-737, Gln-745–Pro-790, Gln-798–Asn-831, Ile-840–Val-871, and Asp-874–Phe-894. The 69-residue stretch at Val-31–Asp-99 folds into the Importin N-terminal domain. Residues Ala-325–Asp-364 are disordered. Residues Ser-355–Asp-364 show a composition bias toward acidic residues. Lys-862 is modified (N6-acetyllysine).

Belongs to the importin beta family. Importin beta-2 subfamily.

The protein localises to the cytoplasm. It localises to the nucleus. Probably functions in nuclear protein import as nuclear transport receptor. Serves as receptor for nuclear localization signals (NLS) in cargo substrates. Is thought to mediate docking of the importin/substrate complex to the nuclear pore complex (NPC) through binding to nucleoporin and the complex is subsequently translocated through the pore by an energy requiring, Ran-dependent mechanism. At the nucleoplasmic side of the NPC, Ran binds to the importin, the importin/substrate complex dissociates and importin is re-exported from the nucleus to the cytoplasm where GTP hydrolysis releases Ran. The directionality of nuclear import is thought to be conferred by an asymmetric distribution of the GTP- and GDP-bound forms of Ran between the cytoplasm and nucleus. The sequence is that of Transportin-2 (TNPO2) from Homo sapiens (Human).